We begin with the raw amino-acid sequence, 243 residues long: Pyridoxine 5'-phosphate synthase (243 aa).

N9 lines the 3-amino-2-oxopropyl phosphate pocket. D11–H12 lines the 1-deoxy-D-xylulose 5-phosphate pocket. Residue R20 coordinates 3-amino-2-oxopropyl phosphate. H45 functions as the Proton acceptor in the catalytic mechanism. 1-deoxy-D-xylulose 5-phosphate-binding residues include R47 and H52. The active-site Proton acceptor is the E72. T102 is a binding site for 1-deoxy-D-xylulose 5-phosphate. The Proton donor role is filled by H193. Residues G194 and G215–H216 contribute to the 3-amino-2-oxopropyl phosphate site.

The protein belongs to the PNP synthase family. In terms of assembly, homooctamer; tetramer of dimers.

It is found in the cytoplasm. The catalysed reaction is 3-amino-2-oxopropyl phosphate + 1-deoxy-D-xylulose 5-phosphate = pyridoxine 5'-phosphate + phosphate + 2 H2O + H(+). It participates in cofactor biosynthesis; pyridoxine 5'-phosphate biosynthesis; pyridoxine 5'-phosphate from D-erythrose 4-phosphate: step 5/5. In terms of biological role, catalyzes the complicated ring closure reaction between the two acyclic compounds 1-deoxy-D-xylulose-5-phosphate (DXP) and 3-amino-2-oxopropyl phosphate (1-amino-acetone-3-phosphate or AAP) to form pyridoxine 5'-phosphate (PNP) and inorganic phosphate. The chain is Pyridoxine 5'-phosphate synthase from Shigella dysenteriae serotype 1 (strain Sd197).